The following is a 151-amino-acid chain: Ribosomal RNA large subunit methyltransferase H (151 aa).

S-adenosyl-L-methionine-binding positions include Gly-100 and 119 to 124; that span reads LSKMTF.

The protein belongs to the RNA methyltransferase RlmH family. As to quaternary structure, homodimer.

The protein localises to the cytoplasm. It carries out the reaction pseudouridine(1915) in 23S rRNA + S-adenosyl-L-methionine = N(3)-methylpseudouridine(1915) in 23S rRNA + S-adenosyl-L-homocysteine + H(+). In terms of biological role, specifically methylates the pseudouridine at position 1915 (m3Psi1915) in 23S rRNA. The sequence is that of Ribosomal RNA large subunit methyltransferase H from Thermotoga sp. (strain RQ2).